Here is a 301-residue protein sequence, read N- to C-terminus: Mitochondrial ornithine transporter 1 (301 aa).

6 consecutive transmembrane segments (helical) span residues 5-25 (PAIQ…ACVL), 68-88 (SPAL…YGFC), 110-130 (AAAG…TELV), 168-188 (GFYH…FFFF), 207-227 (LGPV…WLAV), and 237-257 (IQVL…LSIV). Solcar repeat units follow at residues 7–91 (IQAA…CQQV), 104–197 (LSDL…SRSF), and 207–293 (LGPV…SRKL).

Belongs to the mitochondrial carrier (TC 2.A.29) family. In terms of tissue distribution, widely expressed, with highest levels in the liver, testis and kidney. In the brain, expressed at high levels in the hypothalamus.

Its subcellular location is the mitochondrion inner membrane. The protein resides in the mitochondrion membrane. It carries out the reaction L-citrulline(in) + L-ornithine(out) + H(+)(in) = L-citrulline(out) + L-ornithine(in) + H(+)(out). It catalyses the reaction L-ornithine(in) + L-arginine(out) = L-ornithine(out) + L-arginine(in). The enzyme catalyses L-ornithine(out) + L-lysine(in) = L-ornithine(in) + L-lysine(out). The catalysed reaction is L-lysine(out) + H(+)(in) = L-lysine(in) + H(+)(out). It carries out the reaction L-ornithine(out) + H(+)(in) = L-ornithine(in) + H(+)(out). Its activity is regulated as follows. Inhibited by pyridoxal 5'-phosphate as well as by mercurials (mersalyl, p-chloromercuribenzene sulfonate, and mercuric chloride), N-ethylmaleimide and spermine. Mitochondrial ornithine-citrulline antiporter. Catalyzes the exchange between cytosolic ornithine and mitochondrial citrulline plus an H(+), the proton compensates the positive charge of ornithine thus leading to an electroneutral transport. Plays a crucial role in the urea cycle, by connecting the cytosolic and the intramitochondrial reactions of the urea cycle. Lysine and arginine are also transported by the antiport mechanism. In addition, catalyzes an electroneutral exchange of ornithine or lysine for H(+), a reaction driven by the pH gradient across the inner membrane. The chain is Mitochondrial ornithine transporter 1 from Mus musculus (Mouse).